We begin with the raw amino-acid sequence, 426 residues long: Serine--tRNA ligase (426 aa).

231–233 contacts L-serine; it reads TSE. Residue 262 to 264 participates in ATP binding; sequence RSE. Glutamate 285 is an L-serine binding site. ATP is bound at residue 349-352; it reads EISS. Serine 385 provides a ligand contact to L-serine.

It belongs to the class-II aminoacyl-tRNA synthetase family. Type-1 seryl-tRNA synthetase subfamily. Homodimer. The tRNA molecule binds across the dimer.

Its subcellular location is the cytoplasm. The catalysed reaction is tRNA(Ser) + L-serine + ATP = L-seryl-tRNA(Ser) + AMP + diphosphate + H(+). It carries out the reaction tRNA(Sec) + L-serine + ATP = L-seryl-tRNA(Sec) + AMP + diphosphate + H(+). It functions in the pathway aminoacyl-tRNA biosynthesis; selenocysteinyl-tRNA(Sec) biosynthesis; L-seryl-tRNA(Sec) from L-serine and tRNA(Sec): step 1/1. Catalyzes the attachment of serine to tRNA(Ser). Is also able to aminoacylate tRNA(Sec) with serine, to form the misacylated tRNA L-seryl-tRNA(Sec), which will be further converted into selenocysteinyl-tRNA(Sec). The polypeptide is Serine--tRNA ligase (Legionella pneumophila subsp. pneumophila (strain Philadelphia 1 / ATCC 33152 / DSM 7513)).